Consider the following 437-residue polypeptide: Trigger factor (437 aa).

The 86-residue stretch at 163 to 248 (GDRVIIDFEG…LNNVSEPTLP (86 aa)) folds into the PPIase FKBP-type domain.

The protein belongs to the FKBP-type PPIase family. Tig subfamily.

It is found in the cytoplasm. It catalyses the reaction [protein]-peptidylproline (omega=180) = [protein]-peptidylproline (omega=0). Involved in protein export. Acts as a chaperone by maintaining the newly synthesized protein in an open conformation. Functions as a peptidyl-prolyl cis-trans isomerase. The polypeptide is Trigger factor (Neisseria gonorrhoeae (strain NCCP11945)).